Here is an 88-residue protein sequence, read N- to C-terminus: Small ribosomal subunit protein uS19 (88 aa).

This sequence belongs to the universal ribosomal protein uS19 family.

Protein S19 forms a complex with S13 that binds strongly to the 16S ribosomal RNA. The polypeptide is Small ribosomal subunit protein uS19 (Chlamydia caviae (strain ATCC VR-813 / DSM 19441 / 03DC25 / GPIC) (Chlamydophila caviae)).